Reading from the N-terminus, the 432-residue chain is Lipid-A-disaccharide synthase (432 aa).

Residues 1 to 11 (MTGIGNQTSGI) are compositionally biased toward polar residues. Positions 1 to 35 (MTGIGNQTSGIETGVHDRAPADGEPTALPISHSPL) are disordered.

Belongs to the LpxB family.

It carries out the reaction a lipid X + a UDP-2-N,3-O-bis[(3R)-3-hydroxyacyl]-alpha-D-glucosamine = a lipid A disaccharide + UDP + H(+). Its pathway is bacterial outer membrane biogenesis; LPS lipid A biosynthesis. Its function is as follows. Condensation of UDP-2,3-diacylglucosamine and 2,3-diacylglucosamine-1-phosphate to form lipid A disaccharide, a precursor of lipid A, a phosphorylated glycolipid that anchors the lipopolysaccharide to the outer membrane of the cell. The sequence is that of Lipid-A-disaccharide synthase from Xanthomonas oryzae pv. oryzae (strain MAFF 311018).